The chain runs to 266 residues: Putative pyruvate, phosphate dikinase regulatory protein (266 aa).

147–154 (GLSRTSKT) provides a ligand contact to ADP.

It belongs to the pyruvate, phosphate/water dikinase regulatory protein family. PDRP subfamily.

The enzyme catalyses N(tele)-phospho-L-histidyl/L-threonyl-[pyruvate, phosphate dikinase] + ADP = N(tele)-phospho-L-histidyl/O-phospho-L-threonyl-[pyruvate, phosphate dikinase] + AMP + H(+). It catalyses the reaction N(tele)-phospho-L-histidyl/O-phospho-L-threonyl-[pyruvate, phosphate dikinase] + phosphate + H(+) = N(tele)-phospho-L-histidyl/L-threonyl-[pyruvate, phosphate dikinase] + diphosphate. In terms of biological role, bifunctional serine/threonine kinase and phosphorylase involved in the regulation of the pyruvate, phosphate dikinase (PPDK) by catalyzing its phosphorylation/dephosphorylation. The sequence is that of Putative pyruvate, phosphate dikinase regulatory protein from Clostridium perfringens (strain SM101 / Type A).